We begin with the raw amino-acid sequence, 134 residues long: MILIDTSAWVEYFRATGSIAAVEVRRLLSEEAARIAMCEPIAMEILSGALDDNTHTTLERLVNGLPSLNVDDAIDFRAAAGIYRAARRAGETVRSINDCLIAALAIRHGARIVHRDADFDVIARITNLQAASFR.

Residues 2–126 (ILIDTSAWVE…ADFDVIARIT (125 aa)) enclose the PINc domain. 2 residues coordinate Mg(2+): Asp-5 and Asp-98.

This sequence belongs to the PINc/VapC protein family. Mg(2+) serves as cofactor.

In terms of biological role, toxic component of a type II toxin-antitoxin (TA) system. Acts as an RNase. Its toxic effects on cell growth and colony formation are neutralized by coexpression with cognate antitoxin VapB11. This is Ribonuclease VapC11 from Mycobacterium tuberculosis (strain CDC 1551 / Oshkosh).